Consider the following 188-residue polypeptide: Protein GrpE (188 aa).

The interval 1-22 (MADEQTLDTQNLDANQAPEASG) is disordered.

This sequence belongs to the GrpE family. As to quaternary structure, homodimer.

Its subcellular location is the cytoplasm. Its function is as follows. Participates actively in the response to hyperosmotic and heat shock by preventing the aggregation of stress-denatured proteins, in association with DnaK and GrpE. It is the nucleotide exchange factor for DnaK and may function as a thermosensor. Unfolded proteins bind initially to DnaJ; upon interaction with the DnaJ-bound protein, DnaK hydrolyzes its bound ATP, resulting in the formation of a stable complex. GrpE releases ADP from DnaK; ATP binding to DnaK triggers the release of the substrate protein, thus completing the reaction cycle. Several rounds of ATP-dependent interactions between DnaJ, DnaK and GrpE are required for fully efficient folding. The sequence is that of Protein GrpE from Pseudomonas fluorescens (strain ATCC BAA-477 / NRRL B-23932 / Pf-5).